Here is a 290-residue protein sequence, read N- to C-terminus: MASLKEVKTRINSVQSTRKITSAMKMVASAKLHKAQGAIENMLPYQRKLNKILTNFLSADLPVESPFCVERPVKRVAIVAFSSNSSLCGAFNANVLKMFLQTVGEYRELGQDNILIYPVGKKIEEAVKKLGFFPQGSYQKLADKPSYDEAAALAKLLMELFLEKNIDRVELIYHHFKSMGVQELLRERYLPIDLSAVQNDEERGGVVNDYIIEPSAAQLIADLIPQVLSQKIFTAALDSNASEHAARTLAMQIATDNANELIQELTKQYNKTRQQAITNELLDIVGGSMA.

It belongs to the ATPase gamma chain family. In terms of assembly, F-type ATPases have 2 components, CF(1) - the catalytic core - and CF(0) - the membrane proton channel. CF(1) has five subunits: alpha(3), beta(3), gamma(1), delta(1), epsilon(1). CF(0) has three main subunits: a, b and c.

It localises to the cell inner membrane. Its function is as follows. Produces ATP from ADP in the presence of a proton gradient across the membrane. The gamma chain is believed to be important in regulating ATPase activity and the flow of protons through the CF(0) complex. This Bacteroides fragilis (strain ATCC 25285 / DSM 2151 / CCUG 4856 / JCM 11019 / LMG 10263 / NCTC 9343 / Onslow / VPI 2553 / EN-2) protein is ATP synthase gamma chain.